The following is a 173-amino-acid chain: Peptidyl-prolyl cis-trans isomerase 3 (173 aa).

In terms of domain architecture, PPIase cyclophilin-type spans 7–170 (FFDITIGGKA…KDCMIADCGQ (164 aa)).

This sequence belongs to the cyclophilin-type PPIase family. As to expression, exclusively expressed in the single anterior excretory cell.

It catalyses the reaction [protein]-peptidylproline (omega=180) = [protein]-peptidylproline (omega=0). Functionally, catalyzes the cis-trans isomerization of proline imidic peptide bonds in oligopeptides. Plays a role in protein folding, transport and assembly. This chain is Peptidyl-prolyl cis-trans isomerase 3 (cyn-3), found in Caenorhabditis elegans.